A 430-amino-acid polypeptide reads, in one-letter code: MDTIIKTQIIDLIHREVIPAIGCTEPIAVALAAAKAAEVLGRKPEKIEVYLSANILKNAMGVGIPGTGMVGLPIAIALGSIIGKSAYGLEVLKDLTSEGLKEGKEMVCKKCIGIDLKENVDKLYIEIISSAGNDRSRVIICHEHTHIIYVEKNGEVLTDLRTANASGEEVCENKDLRLSFSMVYEFAMEMPLDEIRFILETAELNKKAAQASMKGNYGHTVSKTVSGAFGRKFMGDSAYTHMLIMTSAACDARMDGAMIPVMSNSGSGNQGIAATLPVLSFAEDIQCSEEQLIRALMLSHLMVIYIKQSLGRLSALCGCVVAATGASCAITYLMGGNKARISYAIKNMIGNITGMICDGAKPSCAMKVSSGVSTAMLSALMAMEDKVVTSVEGIIDEDVDKSIANLTAIGSKGMEATDRLVLDIMTGKSC.

It belongs to the UPF0597 family.

In Parabacteroides distasonis (strain ATCC 8503 / DSM 20701 / CIP 104284 / JCM 5825 / NCTC 11152), this protein is UPF0597 protein BDI_1130.